We begin with the raw amino-acid sequence, 310 residues long: MASWGLLVAGASFTAFRGLHWGLQLLPTPKSVRDRWMWRNIFVSLIHSLLSGVGALVGLWQFPQMVTDPINDHPPWARVLVAVSVGYFAADGVDMLWNQTLAQAWDLLCHHLAVVSCLSTAVVSGHYVGFSMVSLLLELNSICLHLRKLLLLSHKAPSLAFRVSSWASLATLVLFRLLPLGWMSLWLSRQHYQLSLALVLLCVAGLVTVGSISISTGIRILTKDILQSQPYPFILMHKETKTREPVARNTSTLSLKGSRYLYSTAAAALGGHLMVLASPKRCMTPSVLGLQERRLEPGKVAHADNASTWE.

Helical transmembrane passes span 6 to 26, 40 to 60, 79 to 99, 117 to 137, 167 to 187, and 194 to 214; these read LLVA…LQLL, NIFV…VGLW, VLVA…LWNQ, CLST…SLLL, ASLA…SLWL, and LSLA…SISI. Positions 33-227 constitute a TLC domain; the sequence is RDRWMWRNIF…IRILTKDILQ (195 aa).

Belongs to the TLCD family.

The protein localises to the cell membrane. In terms of biological role, regulates the composition and fluidity of the plasma membrane. Inhibits the incorporation of membrane-fluidizing phospholipids containing omega-3 long-chain polyunsaturated fatty acids (LCPUFA) and thereby promotes membrane rigidity. Does not appear to have any effect on LCPUFA synthesis. The polypeptide is TLC domain-containing protein 2 (Tlcd2) (Mus musculus (Mouse)).